The sequence spans 680 residues: Potassium-transporting ATPase ATP-binding subunit (680 aa).

A run of 4 helical transmembrane segments spans residues 37–57 (VIFVTEAMAALVTLFFVLDVA), 69–89 (IAAWLWFTVLFATFAEAVAEG), 223–243 (ILLSGLTLIFLIAVVTLWGLA), and 257–277 (ALLVTLIPTTIGGLLSAIGIA). Asp-307 serves as the catalytic 4-aspartylphosphate intermediate. ATP is bound by residues Asp-344, Glu-348, 375 to 382 (FTAETRLS), and Lys-393. Residues Asp-516 and Asp-520 each contribute to the Mg(2+) site. A run of 3 helical transmembrane segments spans residues 586–606 (FAIIPALFVTTYPALGVLNIM), 614–634 (AILSAVIFNALIIVALIPLAL), and 652–672 (LLVYGLGGLVLPFAGIKLIDL).

The protein belongs to the cation transport ATPase (P-type) (TC 3.A.3) family. Type IA subfamily. In terms of assembly, the system is composed of three essential subunits: KdpA, KdpB and KdpC.

Its subcellular location is the cell inner membrane. It carries out the reaction K(+)(out) + ATP + H2O = K(+)(in) + ADP + phosphate + H(+). In terms of biological role, part of the high-affinity ATP-driven potassium transport (or Kdp) system, which catalyzes the hydrolysis of ATP coupled with the electrogenic transport of potassium into the cytoplasm. This subunit is responsible for energy coupling to the transport system and for the release of the potassium ions to the cytoplasm. In Rhizobium meliloti (strain 1021) (Ensifer meliloti), this protein is Potassium-transporting ATPase ATP-binding subunit.